The primary structure comprises 272 residues: ATP synthase subunit a (272 aa).

5 helical membrane-spanning segments follow: residues 41–61, 101–121, 143–165, 221–241, and 243–263; these read VLNI…LLIF, LIAP…LMDL, VPSA…ILYY, LIFI…LNVP, and AIFH…LTIV.

The protein belongs to the ATPase A chain family. F-type ATPases have 2 components, CF(1) - the catalytic core - and CF(0) - the membrane proton channel. CF(1) has five subunits: alpha(3), beta(3), gamma(1), delta(1), epsilon(1). CF(0) has three main subunits: a(1), b(2) and c(9-12). The alpha and beta chains form an alternating ring which encloses part of the gamma chain. CF(1) is attached to CF(0) by a central stalk formed by the gamma and epsilon chains, while a peripheral stalk is formed by the delta and b chains.

Its subcellular location is the cell inner membrane. In terms of biological role, key component of the proton channel; it plays a direct role in the translocation of protons across the membrane. The polypeptide is ATP synthase subunit a (Sodalis glossinidius (strain morsitans)).